We begin with the raw amino-acid sequence, 860 residues long: Endo-1,4-beta-xylanase B (860 aa).

The N-terminal stretch at 1 to 20 (MKFSSANKILFSGLVASANA) is a signal peptide. A GH10 domain is found at 21–324 (YDLLKDYAGD…KPVYNTLLNI (304 aa)). Residue Glu144 is the Proton donor of the active site. The active-site Nucleophile is Glu255. Residues Cys278 and Cys284 are joined by a disulfide bond. N-linked (GlcNAc...) asparagine glycosylation is found at Asn295, Asn309, Asn359, and Asn374. Composition is skewed to polar residues over residues 330-362 (RPASSSAKTLPGNSKSKTLPGVNSKTLPGNKSK) and 371-418 (LPGN…NSKT). The disordered stretch occupies residues 330 to 793 (RPASSSAKTL…TKTLPGGACK (464 aa)). Repeat 1 spans residues 375 to 382 (KSKTLPGG). Positions 375 to 782 (KSKTLPGGNS…GGKSKTLPGG (408 aa)) are 47 X 8 AA tandem repeats of [SKN]-S-K-T-L-P-G-G. Asn390 carries an N-linked (GlcNAc...) asparagine glycan. The stretch at 391 to 398 (KSKTLPGG) is repeat 2. Asn406 is a glycosylation site (N-linked (GlcNAc...) asparagine). 45 repeat units span residues 415–422 (NSKTLPGG), 431–438 (NSKTLPGG), 439–446 (KSKTLPGG), 447–454 (NSKTLPGG), 455–462 (KSKTLPGG), 463–470 (NSKTLPGG), 471–478 (SSKTLPGG), 479–486 (KSKTLPGG), 487–494 (NSKTLPGG), 495–502 (SSKTLPGG), 503–510 (KSKTLPGG), 511–518 (SSKTLPGG), 519–526 (KSKTLPGG), 527–534 (NSKTLPGG), 535–542 (NSKTLPGG), 543–550 (SSKTLPGG), 551–558 (KSKTLPGG), 559–566 (NSKTLPGG), 567–574 (SSKTLPGG), 575–582 (KSKTLPGG), 583–590 (NSKTLPGG), 591–598 (NSKTLPGG), 599–606 (KSKTLPGG), 607–614 (NSKTLPGG), 615–622 (SSKTLPGG), 623–630 (KSKTLPGG), 631–638 (SSKTLPGG), 639–646 (KSKTLPGG), 647–654 (NSKTLPGG), 655–662 (NSKTLPGG), 663–670 (SSKTLPGG), 671–678 (KSKTLPGG), 679–686 (SSKTLPGG), 687–694 (KSKTLPGG), 695–702 (NSKTLPGG), 703–710 (KSKTLPGG), 711–718 (NSKTLPGG), 719–726 (KSKTLPGG), 727–734 (NSKTLPGG), 735–742 (KSKTLPGG), 743–750 (NSKTLPGG), 751–758 (SSKTLPGG), 759–766 (KSKTLPGG), 767–774 (NSKTLPGG), and 775–782 (KSKTLPGG). Polar residues-rich tracts occupy residues 461–474 (GGNSKTLPGGSSKT) and 485–498 (GGNSKTLPGGSSKT). Polar residues-rich tracts occupy residues 525–546 (GGNSKTLPGGNSKTLPGGSSKT), 557–570 (GGNSKTLPGGSSKT), 581–594 (GGNSKTLPGGNSKT), and 605–618 (GGNSKTLPGGSSKT). Residues 645-666 (GGNSKTLPGGNSKTLPGGSSKT) are compositionally biased toward polar residues. A compositionally biased stretch (polar residues) spans 741–754 (GGNSKTLPGGSSKT). Positions 824–860 (NCAAKWGQCGGNGFNGPTCCQNGSRCQFVNEWYSQCL) constitute a CBM1 domain. Asn845 carries N-linked (GlcNAc...) asparagine glycosylation.

The protein belongs to the glycosyl hydrolase 10 (cellulase F) family.

The protein localises to the secreted. It carries out the reaction Endohydrolysis of (1-&gt;4)-beta-D-xylosidic linkages in xylans.. Its pathway is glycan degradation; xylan degradation. Functionally, endo-1,4-beta-xylanase involved in the hydrolysis of xylan, a major structural heterogeneous polysaccharide found in plant biomass representing the second most abundant polysaccharide in the biosphere, after cellulose. Hydrolyzes both unsubstituted (oat spelts) and highly substituted (rye and wheat) forms of arabinoxylanslans. The sequence is that of Endo-1,4-beta-xylanase B (xynB) from Neocallimastix patriciarum (Rumen fungus).